Consider the following 256-residue polypeptide: Imidazole glycerol phosphate synthase subunit HisF (256 aa).

Residues D12 and D131 contribute to the active site.

Belongs to the HisA/HisF family. In terms of assembly, heterodimer of HisH and HisF.

It is found in the cytoplasm. It catalyses the reaction 5-[(5-phospho-1-deoxy-D-ribulos-1-ylimino)methylamino]-1-(5-phospho-beta-D-ribosyl)imidazole-4-carboxamide + L-glutamine = D-erythro-1-(imidazol-4-yl)glycerol 3-phosphate + 5-amino-1-(5-phospho-beta-D-ribosyl)imidazole-4-carboxamide + L-glutamate + H(+). It participates in amino-acid biosynthesis; L-histidine biosynthesis; L-histidine from 5-phospho-alpha-D-ribose 1-diphosphate: step 5/9. In terms of biological role, IGPS catalyzes the conversion of PRFAR and glutamine to IGP, AICAR and glutamate. The HisF subunit catalyzes the cyclization activity that produces IGP and AICAR from PRFAR using the ammonia provided by the HisH subunit. This is Imidazole glycerol phosphate synthase subunit HisF from Ectopseudomonas mendocina (strain ymp) (Pseudomonas mendocina).